A 117-amino-acid chain; its full sequence is Translation initiation factor 1A (117 aa).

In terms of domain architecture, S1-like spans 17-92; the sequence is IRVPLPDRSK…ERGDIVYRYT (76 aa).

This sequence belongs to the eIF-1A family.

Its function is as follows. Seems to be required for maximal rate of protein biosynthesis. Enhances ribosome dissociation into subunits and stabilizes the binding of the initiator Met-tRNA(I) to 40 S ribosomal subunits. The sequence is that of Translation initiation factor 1A from Thermococcus kodakarensis (strain ATCC BAA-918 / JCM 12380 / KOD1) (Pyrococcus kodakaraensis (strain KOD1)).